The following is a 710-amino-acid chain: Lactoperoxidase (710 aa).

An N-terminal signal peptide occupies residues M1 to A23. Positions S24 to R80 are excised as a propeptide. C130 and C143 are disulfide-bonded. D223 contributes to the heme b binding site. Catalysis depends on H224, which acts as the Proton acceptor. A Ca(2+)-binding site is contributed by D225. Disulfide bonds link C244–C254 and C248–C272. Positions 299, 301, 303, and 305 each coordinate Ca(2+). S313 is subject to Phosphoserine. C352 and C363 are joined by a disulfide. Residues E373 and H466 each coordinate heme b. The residue at position 480 (Y480) is a 3'-nitrotyrosine. Disulfide bonds link C571-C628 and C669-C694.

This sequence belongs to the peroxidase family. Requires Ca(2+) as cofactor. It depends on heme b as a cofactor. Expressed in the colon, including colonocytes and mucin-containing goblet cells. Not detected in the ileum.

Its subcellular location is the secreted. The protein localises to the cytoplasm. The enzyme catalyses 2 a phenolic donor + H2O2 = 2 a phenolic radical donor + 2 H2O. The catalysed reaction is thiocyanate + H2O2 + H(+) = hypothiocyanous acid + H2O. It carries out the reaction iodide + H2O2 = hypoiodite + H2O. Its function is as follows. Heme-containing oxidoreductase which catalyzes the conversion of thiocyanate (SCN(-)) into antimicrobial agent hypothiocyanous acid (OSCN(-)) in the presence of hydrogen peroxide (H2O2). Also involved in the conversion of iodide (I(-)) into hypoiodite (IO(-)) in the presence of H2O2. Responsible for the inactivation of a wide range of micro-organisms and hence, important component of defense mechanism. May be implicated in airway host defense against infection. May contribute to maintaining an appropriate H2O2 cellular level, therefore protecting cells from H2O2-caused injuries and inflammation. This is Lactoperoxidase from Mus musculus (Mouse).